A 143-amino-acid polypeptide reads, in one-letter code: Large ribosomal subunit protein uL11 (143 aa).

It belongs to the universal ribosomal protein uL11 family. In terms of assembly, part of the ribosomal stalk of the 50S ribosomal subunit. Interacts with L10 and the large rRNA to form the base of the stalk. L10 forms an elongated spine to which L12 dimers bind in a sequential fashion forming a multimeric L10(L12)X complex. One or more lysine residues are methylated.

Its function is as follows. Forms part of the ribosomal stalk which helps the ribosome interact with GTP-bound translation factors. The protein is Large ribosomal subunit protein uL11 of Pseudomonas syringae pv. tomato (strain ATCC BAA-871 / DC3000).